The sequence spans 65 residues: Prokaryotic ubiquitin-like protein UBact (65 aa).

Polar residues predominate over residues 1-17 (MEVNMPTTEQGQKNKQM). Residues 1–65 (MEVNMPTTEQ…ARRYRQRTGE (65 aa)) form a disordered region. The span at 35–65 (KVEKPNTEEILKRMRKVDPDQARRYRQRTGE) shows a compositional bias: basic and acidic residues. E65 is covalently cross-linked (Isoglutamyl lysine isopeptide (Glu-Lys) (interchain with K-? in acceptor proteins)).

The protein belongs to the ubiquitin-like protein UBact family.

May function as a protein modifier covalently attached to lysine residues of substrate proteins. This may serve to target the modified proteins for degradation by proteasomes. The chain is Prokaryotic ubiquitin-like protein UBact from Methylacidiphilum infernorum (isolate V4) (Methylokorus infernorum (strain V4)).